The chain runs to 227 residues: Small ribosomal subunit protein uS7 (227 aa).

Acidic residues-rich tracts occupy residues 1 to 12 (MSESDTDPDIDD) and 20 to 31 (NDVDVAVDESES). Residues 1–43 (MSESDTDPDIDDDAHNNGDNDVDVAVDESESAETTTDTDTASA) are disordered. Residues 32–43 (AETTTDTDTASA) show a composition bias toward low complexity.

This sequence belongs to the universal ribosomal protein uS7 family. As to quaternary structure, part of the 30S ribosomal subunit.

Functionally, one of the primary rRNA binding proteins, it binds directly to 16S rRNA where it nucleates assembly of the head domain of the 30S subunit. Is located at the subunit interface close to the decoding center. The protein is Small ribosomal subunit protein uS7 of Haloquadratum walsbyi (strain DSM 16790 / HBSQ001).